The following is a 245-amino-acid chain: METVNTAIQPEKTRRRVLLKLSGEVIGGGKLGVDPETVRAIAKQIAAAVTEVEVAIVVGGGNFFRGAELSQSGMDRSRADYMGMLGTVMNCLALQDFLEQAGVETRVQSAITMGQVAEAYIPRRAIRHMEKGRVVIFGAGAGLPYFSTDTVAAQRALEVHADVVLMAKSGVDGVYTADPKKDPTAEKLDVLSYDDALRRDIRVMDQTAMTMCKDNSLSMVVFGMEGEGNVTRAILGETLGTLVTP.

20–23 is an ATP binding site; it reads KLSG. UMP is bound at residue Gly-60. ATP-binding residues include Gly-61 and Arg-65. UMP contacts are provided by residues Asp-80 and 141-148; that span reads AGLPYFST. ATP is bound by residues Tyr-175 and Asp-178.

The protein belongs to the UMP kinase family. Homohexamer.

Its subcellular location is the cytoplasm. It carries out the reaction UMP + ATP = UDP + ADP. It participates in pyrimidine metabolism; CTP biosynthesis via de novo pathway; UDP from UMP (UMPK route): step 1/1. Its activity is regulated as follows. Inhibited by UTP. Functionally, catalyzes the reversible phosphorylation of UMP to UDP. The sequence is that of Uridylate kinase from Paenarthrobacter aurescens (strain TC1).